The following is a 164-amino-acid chain: Phosphopantetheine adenylyltransferase (164 aa).

Position 14 (T14) interacts with substrate. ATP-binding positions include 14 to 15 (TF) and H22. 3 residues coordinate substrate: K46, L78, and R92. ATP contacts are provided by residues 93–95 (GLR), E103, and 128–134 (HAFISST).

It belongs to the bacterial CoaD family. As to quaternary structure, homohexamer. Mg(2+) serves as cofactor.

The protein resides in the cytoplasm. The enzyme catalyses (R)-4'-phosphopantetheine + ATP + H(+) = 3'-dephospho-CoA + diphosphate. Its pathway is cofactor biosynthesis; coenzyme A biosynthesis; CoA from (R)-pantothenate: step 4/5. Its function is as follows. Reversibly transfers an adenylyl group from ATP to 4'-phosphopantetheine, yielding dephospho-CoA (dPCoA) and pyrophosphate. In Vibrio cholerae serotype O1 (strain ATCC 39541 / Classical Ogawa 395 / O395), this protein is Phosphopantetheine adenylyltransferase.